A 173-amino-acid polypeptide reads, in one-letter code: Alpha-crystallin A chain (173 aa).

Position 1 is an N-acetylmethionine (M1). Residues 52–162 form the sHSP domain; it reads LFRSVLESGI…SHSERPIPVS (111 aa). H100, E102, H107, and H154 together coordinate Zn(2+). The disordered stretch occupies residues 142-173; the sequence is SGPKVPSNMDPSHSERPIPVSREEKPTSAPSS. Residues 153-167 show a composition bias toward basic and acidic residues; it reads SHSERPIPVSREEKP. O-linked (GlcNAc) serine glycosylation occurs at S162.

It belongs to the small heat shock protein (HSP20) family. As to quaternary structure, heteropolymer composed of three CRYAA and one CRYAB subunits. Inter-subunit bridging via zinc ions enhances stability, which is crucial as there is no protein turn over in the lens. Can also form homodimers and homotetramers (dimers of dimers) which serve as the building blocks of homooligomers. Within homooligomers, the zinc-binding motif is created from residues of 3 different molecules. His-100 and Glu-102 from one molecule are ligands of the zinc ion, and His-107 and His-154 residues from additional molecules complete the site with tetrahedral coordination geometry.

Its subcellular location is the cytoplasm. The protein localises to the nucleus. Contributes to the transparency and refractive index of the lens. May act as a chaperone, preventing aggregation of various proteins under a wide range of stress conditions. This Gallus gallus (Chicken) protein is Alpha-crystallin A chain (CRYAA).